Reading from the N-terminus, the 513-residue chain is Putative ribose/galactose/methyl galactoside import ATP-binding protein 2 (513 aa).

ABC transporter domains lie at 24 to 260 (LTAE…VGRE) and 270 to 510 (VPIG…VMEL). Residue 56–63 (GENGAGKS) coordinates ATP.

Belongs to the ABC transporter superfamily. Carbohydrate importer 2 (CUT2) (TC 3.A.1.2) family.

Its subcellular location is the cell inner membrane. The catalysed reaction is D-ribose(out) + ATP + H2O = D-ribose(in) + ADP + phosphate + H(+). The enzyme catalyses D-galactose(out) + ATP + H2O = D-galactose(in) + ADP + phosphate + H(+). In terms of biological role, part of an ABC transporter complex involved in carbohydrate import. Could be involved in ribose, galactose and/or methyl galactoside import. Responsible for energy coupling to the transport system. This chain is Putative ribose/galactose/methyl galactoside import ATP-binding protein 2, found in Rhizobium meliloti (strain 1021) (Ensifer meliloti).